The following is a 43-amino-acid chain: Potassium channel toxin gamma-KTx 4.13 (43 aa).

4 disulfide bridges follow: cysteine 5–cysteine 23, cysteine 11–cysteine 34, cysteine 20–cysteine 39, and cysteine 24–cysteine 41.

It belongs to the ergtoxin family. Gamma-KTx 4 subfamily. As to expression, expressed by the venom gland.

It is found in the secreted. Its function is as follows. Reversibly blocks Kv11/ERG potassium channels. The polypeptide is Potassium channel toxin gamma-KTx 4.13 (Centruroides noxius (Mexican scorpion)).